Consider the following 198-residue polypeptide: Small ribosomal subunit protein uS7 (198 aa).

Belongs to the universal ribosomal protein uS7 family. Part of the 30S ribosomal subunit.

Its function is as follows. One of the primary rRNA binding proteins, it binds directly to 16S rRNA where it nucleates assembly of the head domain of the 30S subunit. Is located at the subunit interface close to the decoding center. This is Small ribosomal subunit protein uS7 from Desulfurococcus mucosus (Desulfurococcus mobilis).